A 286-amino-acid chain; its full sequence is 2-oxoglutarate synthase subunit KorB (286 aa).

As to quaternary structure, heterotetramer of the KorA, KorB, KorC and KorD subunits.

The enzyme catalyses 2 oxidized [2Fe-2S]-[ferredoxin] + 2-oxoglutarate + CoA = succinyl-CoA + 2 reduced [2Fe-2S]-[ferredoxin] + CO2 + H(+). The chain is 2-oxoglutarate synthase subunit KorB (korB) from Methanothermobacter thermautotrophicus (strain ATCC 29096 / DSM 1053 / JCM 10044 / NBRC 100330 / Delta H) (Methanobacterium thermoautotrophicum).